The following is a 282-amino-acid chain: Phosphatidylglycerol--prolipoprotein diacylglyceryl transferase (282 aa).

Transmembrane regions (helical) follow at residues 23-43 (IGPLAIHWYGLAYVAGILLGW), 71-91 (FIVWAALGVVLGGRLGYIFFY), 106-126 (IWNGGMSFHGGLTGTTIAMII), and 132-152 (GIPIWSLFDIVATVVPFGLFF). Residue Arg-154 coordinates a 1,2-diacyl-sn-glycero-3-phospho-(1'-sn-glycerol). Transmembrane regions (helical) follow at residues 189 to 209 (LYEAGLEGIVLLLVLAALVYG), 217 to 237 (GFITGVFVCGYALSRIFVEFF), and 252 to 272 (WLTMGMVLSSPMILLGLWAML).

The protein belongs to the Lgt family.

The protein localises to the cell inner membrane. It carries out the reaction L-cysteinyl-[prolipoprotein] + a 1,2-diacyl-sn-glycero-3-phospho-(1'-sn-glycerol) = an S-1,2-diacyl-sn-glyceryl-L-cysteinyl-[prolipoprotein] + sn-glycerol 1-phosphate + H(+). Its pathway is protein modification; lipoprotein biosynthesis (diacylglyceryl transfer). In terms of biological role, catalyzes the transfer of the diacylglyceryl group from phosphatidylglycerol to the sulfhydryl group of the N-terminal cysteine of a prolipoprotein, the first step in the formation of mature lipoproteins. The chain is Phosphatidylglycerol--prolipoprotein diacylglyceryl transferase from Rhizobium leguminosarum bv. trifolii (strain WSM2304).